A 579-amino-acid chain; its full sequence is Proline--tRNA ligase (579 aa).

Belongs to the class-II aminoacyl-tRNA synthetase family. ProS type 1 subfamily. As to quaternary structure, homodimer.

It localises to the cytoplasm. The catalysed reaction is tRNA(Pro) + L-proline + ATP = L-prolyl-tRNA(Pro) + AMP + diphosphate. In terms of biological role, catalyzes the attachment of proline to tRNA(Pro) in a two-step reaction: proline is first activated by ATP to form Pro-AMP and then transferred to the acceptor end of tRNA(Pro). As ProRS can inadvertently accommodate and process non-cognate amino acids such as alanine and cysteine, to avoid such errors it has two additional distinct editing activities against alanine. One activity is designated as 'pretransfer' editing and involves the tRNA(Pro)-independent hydrolysis of activated Ala-AMP. The other activity is designated 'posttransfer' editing and involves deacylation of mischarged Ala-tRNA(Pro). The misacylated Cys-tRNA(Pro) is not edited by ProRS. In Chlamydia muridarum (strain MoPn / Nigg), this protein is Proline--tRNA ligase.